A 216-amino-acid chain; its full sequence is Probable nicotinate-nucleotide adenylyltransferase (216 aa).

It belongs to the NadD family.

It catalyses the reaction nicotinate beta-D-ribonucleotide + ATP + H(+) = deamido-NAD(+) + diphosphate. It participates in cofactor biosynthesis; NAD(+) biosynthesis; deamido-NAD(+) from nicotinate D-ribonucleotide: step 1/1. Its function is as follows. Catalyzes the reversible adenylation of nicotinate mononucleotide (NaMN) to nicotinic acid adenine dinucleotide (NaAD). This chain is Probable nicotinate-nucleotide adenylyltransferase, found in Shewanella pealeana (strain ATCC 700345 / ANG-SQ1).